The sequence spans 121 residues: Large ribosomal subunit protein bL12 (121 aa).

It belongs to the bacterial ribosomal protein bL12 family. Homodimer. Part of the ribosomal stalk of the 50S ribosomal subunit. Forms a multimeric L10(L12)X complex, where L10 forms an elongated spine to which 2 to 4 L12 dimers bind in a sequential fashion. Binds GTP-bound translation factors.

Functionally, forms part of the ribosomal stalk which helps the ribosome interact with GTP-bound translation factors. Is thus essential for accurate translation. This chain is Large ribosomal subunit protein bL12, found in Anoxybacillus flavithermus (strain DSM 21510 / WK1).